We begin with the raw amino-acid sequence, 330 residues long: Phenylalanine--tRNA ligase alpha subunit (330 aa).

E246 contacts Mg(2+).

The protein belongs to the class-II aminoacyl-tRNA synthetase family. Phe-tRNA synthetase alpha subunit type 1 subfamily. Tetramer of two alpha and two beta subunits. It depends on Mg(2+) as a cofactor.

The protein resides in the cytoplasm. The catalysed reaction is tRNA(Phe) + L-phenylalanine + ATP = L-phenylalanyl-tRNA(Phe) + AMP + diphosphate + H(+). The protein is Phenylalanine--tRNA ligase alpha subunit of Wolinella succinogenes (strain ATCC 29543 / DSM 1740 / CCUG 13145 / JCM 31913 / LMG 7466 / NCTC 11488 / FDC 602W) (Vibrio succinogenes).